The chain runs to 212 residues: Thymidylate kinase (212 aa).

Residue 10 to 17 (GLEGAGKT) participates in ATP binding.

Belongs to the thymidylate kinase family.

The catalysed reaction is dTMP + ATP = dTDP + ADP. Its function is as follows. Phosphorylation of dTMP to form dTDP in both de novo and salvage pathways of dTTP synthesis. The protein is Thymidylate kinase of Yersinia pestis bv. Antiqua (strain Antiqua).